Reading from the N-terminus, the 352-residue chain is C-C chemokine receptor type 5 (352 aa).

Over 1 to 30 (MDYQVSSPTYDIDYYTSEPCQKINVKQIAA) the chain is Extracellular. At Tyr-3 the chain carries Sulfotyrosine. 2 O-linked (GalNAc...) serine glycosylation sites follow: Ser-6 and Ser-7. Residues Tyr-10, Tyr-14, and Tyr-15 each carry the sulfotyrosine modification. Intrachain disulfides connect Cys-20–Cys-269 and Cys-101–Cys-178. Residues 31–58 (RLLPPLYSLVFIFGFVGNILVVLILINC) form a helical membrane-spanning segment. Residues 59-68 (KRLKSMTDIY) lie on the Cytoplasmic side of the membrane. A helical transmembrane segment spans residues 69 to 89 (LLNLAISDLLFLLTVPFWAHY). Over 90–102 (AAAQWDFGNTMCQ) the chain is Extracellular. The chain crosses the membrane as a helical span at residues 103–124 (LLTGLYFIGFFSGIFFIILLTI). The Cytoplasmic portion of the chain corresponds to 125–141 (DRYLAIVHAVFALKART). A helical membrane pass occupies residues 142-166 (VTFGVVTSVITWVVAVFASLPGIIF). Residues 167-198 (TRSQREGLHYTCSSHFPYSQYQFWKNFQTLKM) are Extracellular-facing. A helical transmembrane segment spans residues 199–218 (VILGLVLPLLVMVICYSGIL). Over 219-235 (KTLLRCRNEKKRHRAVR) the chain is Cytoplasmic. A helical membrane pass occupies residues 236-260 (LIFTIMIVYFLFWAPYNIVLLLNTF). Residues 261 to 277 (QEFFGLNNCSSSNRLDQ) are Extracellular-facing. Residues 278-301 (AMQVTETLGMTHCCINPIIYAFVG) traverse the membrane as a helical segment. The Cytoplasmic portion of the chain corresponds to 302 to 352 (EKFRNYLLVFFQKHIAKRFCKCCSIFQQEAPERASSVYTRSTAEQEISVGL). S-palmitoyl cysteine attachment occurs at residues Cys-321, Cys-323, and Cys-324. 4 positions are modified to phosphoserine; by BARK1: Ser-336, Ser-337, Ser-342, and Ser-349.

This sequence belongs to the G-protein coupled receptor 1 family. Interacts with PRAF2. Efficient ligand binding to CCL3/MIP-1alpha and CCL4/MIP-1beta requires sulfation, O-glycosylation and sialic acid modifications. Glycosylation on Ser-6 is required for efficient binding of CCL4. Interacts with GRK2. Interacts with ARRB1 and ARRB2. Interacts with CNIH4. Interacts with S100A4; this interaction stimulates T-lymphocyte chemotaxis. In terms of processing, sulfated on at least 2 of the N-terminal tyrosines. Sulfation is required for efficient binding of the chemokines, CCL3 and CCL4. Post-translationally, palmitoylation in the C-terminal is important for cell surface expression. Phosphorylation on serine residues in the C-terminal is stimulated by binding CC chemokines especially by APO-RANTES. In terms of processing, O-glycosylated, but not N-glycosylated. Ser-6 appears to be the major site even if Ser-7 may be also O-glycosylated. Also sialylated glycans present which contribute to chemokine binding. Thr-16 and Ser-17 may also be glycosylated and, if so, with small moieties such as a T-antigen.

It localises to the cell membrane. In terms of biological role, receptor for a number of inflammatory CC-chemokines including CCL3/MIP-1-alpha, CCL4/MIP-1-beta and RANTES and subsequently transduces a signal by increasing the intracellular calcium ion level. May play a role in the control of granulocytic lineage proliferation or differentiation. Participates in T-lymphocyte migration to the infection site by acting as a chemotactic receptor. This chain is C-C chemokine receptor type 5 (CCR5), found in Macaca arctoides (Stump-tailed macaque).